The sequence spans 360 residues: tRNA N6-adenosine threonylcarbamoyltransferase (360 aa).

Positions 115 and 119 each coordinate Fe cation. Residues 137 to 141 (LVSGG), Asp170, Gly183, and Asn283 contribute to the substrate site. Asp311 contributes to the Fe cation binding site.

Belongs to the KAE1 / TsaD family. Fe(2+) serves as cofactor.

The protein resides in the cytoplasm. It catalyses the reaction L-threonylcarbamoyladenylate + adenosine(37) in tRNA = N(6)-L-threonylcarbamoyladenosine(37) in tRNA + AMP + H(+). Functionally, required for the formation of a threonylcarbamoyl group on adenosine at position 37 (t(6)A37) in tRNAs that read codons beginning with adenine. Is involved in the transfer of the threonylcarbamoyl moiety of threonylcarbamoyl-AMP (TC-AMP) to the N6 group of A37, together with TsaE and TsaB. TsaD likely plays a direct catalytic role in this reaction. The protein is tRNA N6-adenosine threonylcarbamoyltransferase of Sinorhizobium medicae (strain WSM419) (Ensifer medicae).